We begin with the raw amino-acid sequence, 602 residues long: UvrABC system protein C (602 aa).

Residues 19-97 (EEPGVYRMIG…IKSLAPRYNI (79 aa)) enclose the GIY-YIG domain. The region spanning 206–241 (SEVIDDLTARMHAAAERLAFEEAAACRDQVRVLQAV) is the UVR domain.

This sequence belongs to the UvrC family. Interacts with UvrB in an incision complex.

The protein localises to the cytoplasm. The UvrABC repair system catalyzes the recognition and processing of DNA lesions. UvrC both incises the 5' and 3' sides of the lesion. The N-terminal half is responsible for the 3' incision and the C-terminal half is responsible for the 5' incision. In Aromatoleum aromaticum (strain DSM 19018 / LMG 30748 / EbN1) (Azoarcus sp. (strain EbN1)), this protein is UvrABC system protein C.